Consider the following 201-residue polypeptide: Protein CIMAP1C (201 aa).

An STPGR repeat occupies 171–186; the sequence is PAPTMSSRSGHTSPAR. A disordered region spans residues 172–201; that stretch reads APTMSSRSGHTSPARLLSPWASSTRPTYAR. The span at 191 to 201 shows a compositional bias: polar residues; the sequence is WASSTRPTYAR.

Belongs to the CIMAP family.

This Bos taurus (Bovine) protein is Protein CIMAP1C (CIMAP1C).